We begin with the raw amino-acid sequence, 338 residues long: tRNA-specific 2-thiouridylase MnmA (338 aa).

ATP contacts are provided by residues 6 to 13 (AMSGGVDS) and methionine 32. Cysteine 92 acts as the Nucleophile in catalysis. Cysteine 92 and cysteine 186 are disulfide-bonded. Position 116 (glycine 116) interacts with ATP. The segment at 134-136 (KDQ) is interaction with tRNA. Cysteine 186 (cysteine persulfide intermediate) is an active-site residue. Positions 288 to 289 (RY) are interaction with tRNA.

Belongs to the MnmA/TRMU family.

It is found in the cytoplasm. The enzyme catalyses S-sulfanyl-L-cysteinyl-[protein] + uridine(34) in tRNA + AH2 + ATP = 2-thiouridine(34) in tRNA + L-cysteinyl-[protein] + A + AMP + diphosphate + H(+). Catalyzes the 2-thiolation of uridine at the wobble position (U34) of tRNA, leading to the formation of s(2)U34. The polypeptide is tRNA-specific 2-thiouridylase MnmA (Campylobacter lari (strain RM2100 / D67 / ATCC BAA-1060)).